A 347-amino-acid polypeptide reads, in one-letter code: Putative GDP-L-fucose synthase 2 (347 aa).

A disordered region spans residues 1–20; it reads MPSQQRSSSGSTAKAGDADG. 41–47 is a binding site for NADP(+); it reads GHRGMVG. Tyrosine 168 functions as the Proton donor/acceptor in the catalytic mechanism. NADP(+) contacts are provided by residues lysine 172, 195-198, and histidine 211; that span reads PNNL. 4 residues coordinate substrate: arginine 219, tryptophan 234, arginine 241, and glutamate 301.

This sequence belongs to the NAD(P)-dependent epimerase/dehydratase family. Fucose synthase subfamily. In terms of assembly, homodimer.

It catalyses the reaction GDP-beta-L-fucose + NADP(+) = GDP-4-dehydro-alpha-D-rhamnose + NADPH + H(+). It functions in the pathway nucleotide-sugar biosynthesis; GDP-L-fucose biosynthesis via de novo pathway; GDP-L-fucose from GDP-alpha-D-mannose: step 2/2. In terms of biological role, catalyzes the two-step NADP-dependent conversion of GDP-4-dehydro-6-deoxy-D-mannose to GDP-fucose, involving an epimerase and a reductase reaction. The chain is Putative GDP-L-fucose synthase 2 from Oryza sativa subsp. japonica (Rice).